We begin with the raw amino-acid sequence, 270 residues long: 4-hydroxy-tetrahydrodipicolinate reductase (270 aa).

NAD(+) is bound by residues 8-13 (GALGRM), Asp-34, 102-104 (GTT), and 128-131 (SQNY). Residue His-160 is the Proton donor/acceptor of the active site. His-161 provides a ligand contact to (S)-2,3,4,5-tetrahydrodipicolinate. Lys-164 acts as the Proton donor in catalysis. (S)-2,3,4,5-tetrahydrodipicolinate is bound at residue 170–171 (GT).

It belongs to the DapB family.

Its subcellular location is the cytoplasm. The catalysed reaction is (S)-2,3,4,5-tetrahydrodipicolinate + NAD(+) + H2O = (2S,4S)-4-hydroxy-2,3,4,5-tetrahydrodipicolinate + NADH + H(+). It carries out the reaction (S)-2,3,4,5-tetrahydrodipicolinate + NADP(+) + H2O = (2S,4S)-4-hydroxy-2,3,4,5-tetrahydrodipicolinate + NADPH + H(+). It functions in the pathway amino-acid biosynthesis; L-lysine biosynthesis via DAP pathway; (S)-tetrahydrodipicolinate from L-aspartate: step 4/4. Catalyzes the conversion of 4-hydroxy-tetrahydrodipicolinate (HTPA) to tetrahydrodipicolinate. The chain is 4-hydroxy-tetrahydrodipicolinate reductase from Methanococcus vannielii (strain ATCC 35089 / DSM 1224 / JCM 13029 / OCM 148 / SB).